Consider the following 276-residue polypeptide: Diaminopimelate epimerase (276 aa).

Residues N13, Q46, and N66 each coordinate substrate. The active-site Proton donor is C75. Substrate is bound by residues G76–N77, N159, N192, and E210–R211. C219 serves as the catalytic Proton acceptor. G220–S221 is a substrate binding site.

This sequence belongs to the diaminopimelate epimerase family. In terms of assembly, homodimer.

It is found in the cytoplasm. It catalyses the reaction (2S,6S)-2,6-diaminopimelate = meso-2,6-diaminopimelate. It functions in the pathway amino-acid biosynthesis; L-lysine biosynthesis via DAP pathway; DL-2,6-diaminopimelate from LL-2,6-diaminopimelate: step 1/1. In terms of biological role, catalyzes the stereoinversion of LL-2,6-diaminopimelate (L,L-DAP) to meso-diaminopimelate (meso-DAP), a precursor of L-lysine and an essential component of the bacterial peptidoglycan. This chain is Diaminopimelate epimerase, found in Coxiella burnetii (strain CbuK_Q154) (Coxiella burnetii (strain Q154)).